The following is a 187-amino-acid chain: Large ribosomal subunit protein uL22B (187 aa).

The protein belongs to the universal ribosomal protein uL22 family. In terms of assembly, component of the large ribosomal subunit (LSU). Mature yeast ribosomes consist of a small (40S) and a large (60S) subunit. The 40S small subunit contains 1 molecule of ribosomal RNA (18S rRNA) and at least 33 different proteins. The large 60S subunit contains 3 rRNA molecules (25S, 5.8S and 5S rRNA) and at least 46 different proteins. uL22 is associated with the polypeptide exit tunnel.

The protein localises to the cytoplasm. In terms of biological role, component of the ribosome, a large ribonucleoprotein complex responsible for the synthesis of proteins in the cell. The small ribosomal subunit (SSU) binds messenger RNAs (mRNAs) and translates the encoded message by selecting cognate aminoacyl-transfer RNA (tRNA) molecules. The large subunit (LSU) contains the ribosomal catalytic site termed the peptidyl transferase center (PTC), which catalyzes the formation of peptide bonds, thereby polymerizing the amino acids delivered by tRNAs into a polypeptide chain. The nascent polypeptides leave the ribosome through a tunnel in the LSU and interact with protein factors that function in enzymatic processing, targeting, and the membrane insertion of nascent chains at the exit of the ribosomal tunnel. The polypeptide is Large ribosomal subunit protein uL22B (rpl1702) (Schizosaccharomyces pombe (strain 972 / ATCC 24843) (Fission yeast)).